A 99-amino-acid chain; its full sequence is Elongin-C (99 aa).

At serine 2 the chain carries N-acetylserine. Serine 2 carries the phosphoserine modification.

This sequence belongs to the SKP1 family. As to quaternary structure, heterodimer with ELA1. Component of a CRL3 E3 ubiquitin ligase complex consisting of the cullin CUL3, the linker protein ELC1, the substrate receptor ELA1, and the RING protein HRT1. Interacts with CIN5. Interacts with PCL6. Interacts with SNF4. Interacts with the large RNA polymerase II subunit RPO21 in a manner dependent on DEF1. Interacts with DEF1. Interacts with RAD7. Interacts with RAD16.

Its subcellular location is the cytoplasm. It is found in the nucleus. As part of the CRL3 E3 ubiquitin ligase complex; polyubiquitylates monoubiquitylated RNA polymerase II subunit RPO21 to trigger its proteolysis; plays a role in global genomic repair. Prevents degradation of interacting proteins like PCL6 by the proteasome. The sequence is that of Elongin-C (ELC1) from Saccharomyces cerevisiae (strain ATCC 204508 / S288c) (Baker's yeast).